We begin with the raw amino-acid sequence, 298 residues long: tRNA uridine(34) hydroxylase (298 aa).

A Rhodanese domain is found at 123–217; sequence QNPDVTLVDT…YLEEIPVAES (95 aa). The active-site Cysteine persulfide intermediate is the Cys177.

Belongs to the TrhO family.

It catalyses the reaction uridine(34) in tRNA + AH2 + O2 = 5-hydroxyuridine(34) in tRNA + A + H2O. Functionally, catalyzes oxygen-dependent 5-hydroxyuridine (ho5U) modification at position 34 in tRNAs. In Picosynechococcus sp. (strain ATCC 27264 / PCC 7002 / PR-6) (Agmenellum quadruplicatum), this protein is tRNA uridine(34) hydroxylase.